Reading from the N-terminus, the 348-residue chain is Selenide, water dikinase (348 aa).

Residue C17 is part of the active site. Residues K20 and 47–49 (THD) contribute to the ATP site. A Mg(2+)-binding site is contributed by D50. ATP contacts are provided by residues D67, D90, and 138 to 140 (GHT). Residue D90 participates in Mg(2+) binding. D226 lines the Mg(2+) pocket.

This sequence belongs to the selenophosphate synthase 1 family. Class I subfamily. As to quaternary structure, homodimer. The cofactor is Mg(2+).

The catalysed reaction is hydrogenselenide + ATP + H2O = selenophosphate + AMP + phosphate + 2 H(+). Functionally, synthesizes selenophosphate from selenide and ATP. This Porphyromonas gingivalis (strain ATCC BAA-308 / W83) protein is Selenide, water dikinase.